Consider the following 800-residue polypeptide: Endonuclease MutS2 (800 aa).

336 to 343 (GPNTGGKT) is an ATP binding site. In terms of domain architecture, Smr spans 725-800 (LDLRGVRYEA…GDGATIVELK (76 aa)).

It belongs to the DNA mismatch repair MutS family. MutS2 subfamily. In terms of assembly, homodimer. Binds to stalled ribosomes, contacting rRNA.

Its function is as follows. Endonuclease that is involved in the suppression of homologous recombination and thus may have a key role in the control of bacterial genetic diversity. In terms of biological role, acts as a ribosome collision sensor, splitting the ribosome into its 2 subunits. Detects stalled/collided 70S ribosomes which it binds and splits by an ATP-hydrolysis driven conformational change. Acts upstream of the ribosome quality control system (RQC), a ribosome-associated complex that mediates the extraction of incompletely synthesized nascent chains from stalled ribosomes and their subsequent degradation. Probably generates substrates for RQC. The protein is Endonuclease MutS2 of Leuconostoc mesenteroides subsp. mesenteroides (strain ATCC 8293 / DSM 20343 / BCRC 11652 / CCM 1803 / JCM 6124 / NCDO 523 / NBRC 100496 / NCIMB 8023 / NCTC 12954 / NRRL B-1118 / 37Y).